The following is a 414-amino-acid chain: Nuclear pore complex-interacting protein family member B7 (414 aa).

An N-terminal signal peptide occupies residues 1–18; the sequence is MRLRFWLLIWLLLGFISH. N-linked (GlcNAc...) asparagine glycosylation occurs at asparagine 111. Disordered stretches follow at residues 242 to 262 and 335 to 402; these read RMGRQPPPPTQQHSITDNSLS and SPLP…LRTR. The span at 252–262 shows a compositional bias: polar residues; sequence QQHSITDNSLS. Basic and acidic residues predominate over residues 356–384; sequence EVEKPPKPKRWRVDEVEQSPKPKRQREAE. Over residues 390-402 the composition is skewed to basic residues; that stretch reads KPKRRRLSKLRTR.

It belongs to the NPIP family.

The protein localises to the secreted. This is Nuclear pore complex-interacting protein family member B7 (NPIPB7) from Homo sapiens (Human).